A 482-amino-acid chain; its full sequence is BEL1-like homeodomain protein 7 (482 aa).

The tract at residues 118–134 is SR/KY domain; sequence SKYLKAAQELLDETVNV. The BELL domain stretch occupies residues 167–238; sequence ERQELQSKLS…CLRDAISGQI (72 aa). The segment at residues 285-347 is a DNA-binding region (homeobox); it reads TWRPQRGLPD…NARVRLWKPM (63 aa). Residues 358–401 form a disordered region; the sequence is DALQENDPNQSSENTPEITEIQELQTESSSNNGHVPGVASSSMR. The span at 363–401 shows a compositional bias: polar residues; sequence NDPNQSSENTPEITEIQELQTESSSNNGHVPGVASSSMR.

Belongs to the TALE/BELL homeobox family. As to quaternary structure, may form heterodimeric complexes with TALE/KNOX proteins.

The protein localises to the nucleus. The polypeptide is BEL1-like homeodomain protein 7 (BLH7) (Arabidopsis thaliana (Mouse-ear cress)).